The following is a 153-amino-acid chain: MSEENPCPRNIFLLCKEYGLELEDLRLLCVWCKRPLSEADIWAFAIKELFVVWRKGFPFGACGKCLIAAGKLRQYRHWHYSCYGDTVETETGIPIPQLFMRCYICHKPLSWEEKEALLVGNKRFHNISGRWTGHCMNCGSSCTATDPASRTLH.

2 zinc fingers span residues 29–65 and 102–138; these read CVWCKRPLSEADIWAFAIKELFVVWRKGFPFGACGKC and CYICHKPLSWEEKEALLVGNKRFHNISGRWTGHCMNC.

This sequence belongs to the papillomaviridae E6 protein family. As to quaternary structure, forms homodimers. Interacts with ubiquitin-protein ligase UBE3A/E6-AP; this interaction stimulates UBE3A ubiquitin activity. Interacts with host TP53 and EP300; this interaction inhibits TP53 activity.

It is found in the host cytoplasm. The protein localises to the host nucleus. Plays a major role in the induction and maintenance of cellular transformation. E6 associates with host UBE3A/E6-AP ubiquitin-protein ligase and modulates its activity. Sequesters tumor suppressor TP53 in the host cytoplasm and modulates its activity by interacting with host EP300 that results in the reduction of TP53 acetylation and activation. In turn, apoptosis induced by DNA damage is inhibited. E6 also protects host keratinocytes from apoptosis by mediating the degradation of host BAK1. May also inhibit host immune response. This is Protein E6 from Human papillomavirus type 2a.